A 472-amino-acid polypeptide reads, in one-letter code: Exodeoxyribonuclease 7 large subunit (472 aa).

The protein belongs to the XseA family. In terms of assembly, heterooligomer composed of large and small subunits.

The protein localises to the cytoplasm. It carries out the reaction Exonucleolytic cleavage in either 5'- to 3'- or 3'- to 5'-direction to yield nucleoside 5'-phosphates.. In terms of biological role, bidirectionally degrades single-stranded DNA into large acid-insoluble oligonucleotides, which are then degraded further into small acid-soluble oligonucleotides. In Carboxydothermus hydrogenoformans (strain ATCC BAA-161 / DSM 6008 / Z-2901), this protein is Exodeoxyribonuclease 7 large subunit.